Reading from the N-terminus, the 962-residue chain is Atromentin synthetase nps3 (962 aa).

Residues 55-469 (FISSSAHDSS…SGRIKDTVIV (415 aa)) form an adenylation (A) domain region. A Carrier domain is found at 601-679 (VPATITETAF…DLAKYIDALV (79 aa)). The tract at residues 606 to 676 (TETAFAKIFA…VLRDLAKYID (71 aa)) is thiolation and peptide carrier (T) domain. An O-(pantetheine 4'-phosphoryl)serine modification is found at S638. The tract at residues 702-805 (PIFFVHPGVG…VGLINIPPHI (104 aa)) is thioesterase (TE) domain.

This sequence belongs to the ATP-dependent AMP-binding enzyme family.

Its pathway is secondary metabolite biosynthesis. Functionally, an L-tyrosine:2-oxoglutarate aminotransferase (probably amt1) and atromentin synthetase nps3 catalyze consecutive steps to turn over L-tyrosine into atromentin, which represents the generic precursor molecule for the entire terphenylquinone and pulvinic acid family of pigments, which are widely distributed secondary metabolites in homobasidiomycetes. The first step catalyzed by the aminotransferase converts L-tyrosine in to 4-hydroxyphenylpyruvate (4-HPP). Adenylation of two 4-HPP monomers by the nps3 adenylation (A) domain, covalent tethering of the monomers as a thioester and oxoester onto the nps3 thiolation (T) and thioesterase (TE) domains, respectively, and symmetric C-C-bond formation between two monomers catalyzed by the nps3 TE domain leads to atromentin. Follow-up products of atromentin in S.lacrymans include atromentic acid, xerocomic acid, isoxerocomic acid and variegatic acid. This Serpula lacrymans var. lacrymans (strain S7.9) (Dry rot fungus) protein is Atromentin synthetase nps3 (nps3).